Reading from the N-terminus, the 242-residue chain is NADPH-dependent pterin aldehyde reductase (242 aa).

Threonine 2 carries the N-acetylthreonine modification. NADP(+) is bound at residue 21–50 (LITGVSKGLGRALALELAKRGHTVIGCARS). Serine 153 contributes to the substrate binding site. The Proton acceptor role is filled by tyrosine 166. Lysine 170 contributes to the NADP(+) binding site.

This sequence belongs to the short-chain dehydrogenases/reductases (SDR) family. As to quaternary structure, homodimer. As to expression, mostly expressed in seeds, and, to a lower extent, in roots, leaves, flowers and siliques.

It localises to the cytoplasm. Functionally, NADPH-dependent pterin aldehyde reductase involved in pterin aldehyde salvage during folate turnover. Catalyzes the reduction of diverse aromatic and aliphatic aldehydes (e.g. acetaldehyde, n-propanal, 1-naphthaldehyde, benzaldehyde, cinnamaldehyde, n-butanal, n-hexanal, n-pentanal, 2-naphthaldehyde, n-octanal, n-nonanal and n-heptanal), in addition to the conversion of pterin-6-aldehyde (PtCHO) to 6-hydroxymethylpterin (PtCH(2)OH), and the conversion of dihydropterin-6-aldehyde (H(2)PtCHO) to 6-hydroxymethyldihydropterin (H(2)PtCH(2)OH). Cannot reduce the pterin ring. This Arabidopsis thaliana (Mouse-ear cress) protein is NADPH-dependent pterin aldehyde reductase.